We begin with the raw amino-acid sequence, 449 residues long: Hyaluronidase-1 (449 aa).

Positions 1 to 23 (MYHLWIKCLAAWIFLKRCNGVHA) are cleaved as a signal peptide. Disulfide bonds link Cys-47–Cys-340 and Cys-211–Cys-227. Residues Asn-67, Asn-103, and Asn-111 are each glycosylated (N-linked (GlcNAc...) asparagine). Catalysis depends on Glu-135, which acts as the Proton donor. An N-linked (GlcNAc...) asparagine glycan is attached at Asn-153. An N-linked (GlcNAc...) asparagine glycan is attached at Asn-357. Disulfide bonds link Cys-365-Cys-376, Cys-370-Cys-427, and Cys-429-Cys-438. A glycan (N-linked (GlcNAc...) asparagine) is linked at Asn-401. In terms of domain architecture, EGF-like spans 427–438 (CQCYQGWKGLYC).

Belongs to the glycosyl hydrolase 56 family. In terms of assembly, monomer. Expressed by the venom gland.

The protein localises to the secreted. The catalysed reaction is Random hydrolysis of (1-&gt;4)-linkages between N-acetyl-beta-D-glucosamine and D-glucuronate residues in hyaluronate.. In terms of biological role, snake venom endo-hyaluronidase that degrades hyaluronan to smaller oligosaccharide fragments. In venom, it is not toxic by itself, but increases the diffusion of other venom proteins by degrading the extracellular matrix. In addition, it displays antiedematogenic activity. The chain is Hyaluronidase-1 from Bitis arietans (African puff adder).